The sequence spans 456 residues: D-glycerate 3-kinase, chloroplastic (456 aa).

A chloroplast-targeting transit peptide spans 1–63; sequence MAVAISGSSL…KFNDHVVNPS (63 aa). An ATP-binding site is contributed by 215 to 222; the sequence is APQGCGKT.

Belongs to the GLYK kinase family.

The protein resides in the plastid. The protein localises to the chloroplast. Its subcellular location is the cytoplasm. It carries out the reaction (R)-glycerate + ATP = (2R)-3-phosphoglycerate + ADP + H(+). The protein operates within photosynthesis; photorespiration; 3-phospho-D-glycerate from glycine: step 4/4. Its function is as follows. Catalyzes the concluding reaction of the photorespiratory C2 cycle, an indispensable ancillary metabolic pathway to the photosynthetic C3 cycle that enables land plants to grow in an oxygen-containing atmosphere. Cytoplasmic D-glycerate 3-kinase that constitutes a photorespiratory bypass that alleviates fluctuating light-induced photoinhibition. The sequence is that of D-glycerate 3-kinase, chloroplastic from Arabidopsis thaliana (Mouse-ear cress).